A 179-amino-acid chain; its full sequence is Translation initiation factor IF-3 (179 aa).

This sequence belongs to the IF-3 family. In terms of assembly, monomer.

Its subcellular location is the cytoplasm. Its function is as follows. IF-3 binds to the 30S ribosomal subunit and shifts the equilibrium between 70S ribosomes and their 50S and 30S subunits in favor of the free subunits, thus enhancing the availability of 30S subunits on which protein synthesis initiation begins. This chain is Translation initiation factor IF-3, found in Leptospira interrogans serogroup Icterohaemorrhagiae serovar copenhageni (strain Fiocruz L1-130).